Reading from the N-terminus, the 221-residue chain is Riboflavin kinase (221 aa).

Residues 1 to 92 (MVTPEDLECL…YRLFGRQEKS (92 aa)) form an H-T-H motif-like region. Residues 93–221 (LMLNGTVQSG…GDEVTIEVTL (129 aa)) form a riboflavin kinase region. 102-107 (GLGEGA) is a CDP binding site. Mg(2+) contacts are provided by T131 and N133. T188 and E196 together coordinate FMN. A CDP-binding site is contributed by 201 to 204 (EGLR).

Belongs to the archaeal riboflavin kinase family. The cofactor is Mg(2+).

The enzyme catalyses riboflavin + CTP = CDP + FMN + H(+). It functions in the pathway cofactor biosynthesis; FMN biosynthesis; FMN from riboflavin (CTP route): step 1/1. Functionally, catalyzes the CTP-dependent phosphorylation of riboflavin (vitamin B2) to form flavin mononucleotide (FMN). This chain is Riboflavin kinase (ribK), found in Methanospirillum hungatei JF-1 (strain ATCC 27890 / DSM 864 / NBRC 100397 / JF-1).